The chain runs to 139 residues: Large ribosomal subunit protein bL17 (139 aa).

The protein belongs to the bacterial ribosomal protein bL17 family. Part of the 50S ribosomal subunit. Contacts protein L32.

The sequence is that of Large ribosomal subunit protein bL17 from Azorhizobium caulinodans (strain ATCC 43989 / DSM 5975 / JCM 20966 / LMG 6465 / NBRC 14845 / NCIMB 13405 / ORS 571).